Consider the following 1982-residue polypeptide: Ras guanine nucleotide exchange factor V (1982 aa).

15 LRR repeats span residues 1–26, 47–68, 69–94, 105–128, 130–151, 164–187, 188–210, 212–234, 236–257, 261–284, 286–307, 308–330, 331–352, 354–376, and 378–399; these read MGNI…SLEG, LTQL…ITNL, SNLS…PFKP, NENL…VFVL, NLKQ…LCGG, ACQL…IGDQ, LTTL…SFSN, VSLT…LCTL, KLVH…HTLG, LPSL…ILEI, SLRV…IGNL, LNLN…IGEL, INLR…EFSK, SKLN…LHSL, and QLLR…LIKS. At 1–1831 the chain is on the extracellular side; the sequence is MGNINSICLN…IANAFYELRN (1831 aa). 3 disordered regions span residues 414–436, 457–532, and 615–654; these read YGST…STHG, NQIN…NKKQ, and NNSG…RRGS. Low complexity-rich tracts occupy residues 415–436 and 457–495; these read GSTM…STHG and NQIN…TPNG. The LRR 16 repeat unit spans residues 443 to 466; the sequence is DILLSSVTLNNSILNQINNNNNNN. Over residues 506 to 520 the composition is skewed to polar residues; sequence LTISRSLFRGNSSNL. Residues 515–567 are a coiled coil; sequence GNSSNLESEKEDFINKKQQQQQQQQQQQQQQQQQQQQQQQQQQQQQQQQQQLG. One copy of the LRR 17 repeat lies at 592–615; the sequence is EDDIQKMQLGLEALSNLETSIGSN. The span at 616–642 shows a compositional bias: gly residues; the sequence is NSGGGDSMNGSGGNINNSGGSGSGCGT. LRR repeat units lie at residues 657-684 and 773-796; these read LPPT…VMSG and HSNL…LSSS. Disordered regions lie at residues 756–778 and 807–829; these read QSST…NLSQ and LQFQ…SNQP. A GBD/FH3 domain is found at 832–1236; that stretch reads TIVPSFSKFK…QIKYSIDRYG (405 aa). 4 LRR repeats span residues 979–1003, 1075–1100, 1239–1263, and 1689–1712; these read LLGI…GYCL, SPYV…VFKI, VPAI…RWVD, and VQNM…FVDL. The region spanning 1595–1717 is the N-terminal Ras-GEF domain; sequence KDRRVSSVTL…LFVDLSTKSY (123 aa). The Ras-GEF domain occupies 1747–1974; it reads DEIEIARQLS…YEMSLSAEPR (228 aa). The chain crosses the membrane as a helical span at residues 1832–1848; that stretch reads YHLLMAIISGLNASPVL. The Cytoplasmic segment spans residues 1849 to 1982; it reads RLKYTKGKLS…PRNAERYDIQ (134 aa). 2 LRR repeats span residues 1865 to 1888 and 1917 to 1941; these read LDTL…LAAA and RINF…LFPY.

The protein resides in the membrane. In terms of biological role, promotes the exchange of Ras-bound GDP by GTP. This Dictyostelium discoideum (Social amoeba) protein is Ras guanine nucleotide exchange factor V (gefV).